A 319-amino-acid chain; its full sequence is Type II methyltransferase M.RsrI (319 aa).

The segment covering 1 to 10 (MANRSHHNAG) has biased composition (basic residues). The interval 1–32 (MANRSHHNAGHRAMNALRKSGQKHSSESQLGS) is disordered.

This sequence belongs to the N(4)/N(6)-methyltransferase family.

The enzyme catalyses a 2'-deoxyadenosine in DNA + S-adenosyl-L-methionine = an N(6)-methyl-2'-deoxyadenosine in DNA + S-adenosyl-L-homocysteine + H(+). Its activity is regulated as follows. Strongly inhibited by N-ethylmaleimide, inactivated by MgCl(2) or MgSO(4). A beta subtype methylase, recognizes the double-stranded sequence 5'-GAATTC-3', methylates A-3 on both strands, and protects the DNA from cleavage by the RsrI endonuclease. This chain is Type II methyltransferase M.RsrI, found in Cereibacter sphaeroides (Rhodobacter sphaeroides).